The sequence spans 409 residues: Peptidase T (409 aa).

A Zn(2+)-binding site is contributed by His-78. Asp-80 is an active-site residue. Residue Asp-140 participates in Zn(2+) binding. Glu-173 acts as the Proton acceptor in catalysis. Zn(2+)-binding residues include Glu-174, Asp-196, and His-379.

This sequence belongs to the peptidase M20B family. Requires Zn(2+) as cofactor.

It is found in the cytoplasm. The enzyme catalyses Release of the N-terminal residue from a tripeptide.. Functionally, cleaves the N-terminal amino acid of tripeptides. This Salmonella dublin (strain CT_02021853) protein is Peptidase T.